The following is a 192-amino-acid chain: MSKSSEKSVLKSERIILGIDPGTTIMGFGLIKVENKKMSFIQMNELQLSKYKDHYVKLKLIFERTIELIDNYHPDEIAIEAPFFGKNVQSMLKLGRAQGVAMAAGLSREVPITEYLPKKIKMAITGNGNASKEQVARMLQSQLNIGKLPKNLDATDGLAAAVCHFYNSGKTEIGKSYTGWDAFVKQNPKKIR.

Active-site residues include aspartate 20, glutamate 80, and aspartate 153. Positions 20, 80, and 153 each coordinate Mg(2+).

This sequence belongs to the RuvC family. In terms of assembly, homodimer which binds Holliday junction (HJ) DNA. The HJ becomes 2-fold symmetrical on binding to RuvC with unstacked arms; it has a different conformation from HJ DNA in complex with RuvA. In the full resolvosome a probable DNA-RuvA(4)-RuvB(12)-RuvC(2) complex forms which resolves the HJ. It depends on Mg(2+) as a cofactor.

The protein resides in the cytoplasm. It catalyses the reaction Endonucleolytic cleavage at a junction such as a reciprocal single-stranded crossover between two homologous DNA duplexes (Holliday junction).. Functionally, the RuvA-RuvB-RuvC complex processes Holliday junction (HJ) DNA during genetic recombination and DNA repair. Endonuclease that resolves HJ intermediates. Cleaves cruciform DNA by making single-stranded nicks across the HJ at symmetrical positions within the homologous arms, yielding a 5'-phosphate and a 3'-hydroxyl group; requires a central core of homology in the junction. The consensus cleavage sequence is 5'-(A/T)TT(C/G)-3'. Cleavage occurs on the 3'-side of the TT dinucleotide at the point of strand exchange. HJ branch migration catalyzed by RuvA-RuvB allows RuvC to scan DNA until it finds its consensus sequence, where it cleaves and resolves the cruciform DNA. The chain is Crossover junction endodeoxyribonuclease RuvC from Christiangramia forsetii (strain DSM 17595 / CGMCC 1.15422 / KT0803) (Gramella forsetii).